Reading from the N-terminus, the 130-residue chain is Ribosome-binding factor A (130 aa).

The protein belongs to the RbfA family. Monomer. Binds 30S ribosomal subunits, but not 50S ribosomal subunits or 70S ribosomes.

It is found in the cytoplasm. Its function is as follows. One of several proteins that assist in the late maturation steps of the functional core of the 30S ribosomal subunit. Associates with free 30S ribosomal subunits (but not with 30S subunits that are part of 70S ribosomes or polysomes). Required for efficient processing of 16S rRNA. May interact with the 5'-terminal helix region of 16S rRNA. This chain is Ribosome-binding factor A, found in Flavobacterium johnsoniae (strain ATCC 17061 / DSM 2064 / JCM 8514 / BCRC 14874 / CCUG 350202 / NBRC 14942 / NCIMB 11054 / UW101) (Cytophaga johnsonae).